The chain runs to 623 residues: MKQPNRKRKLNMDSKERLDQDGRLEQAEEEKKPKDSTTPLSHVPSAAAQGAWSWEWYLKEQKAVAAPVELFSKDQSFPEHENGFQIGMRLEGIDPRHPSVFCVLSVAEVCGYRLRLHFDGYLSCYDFWTNAGSPDIHPVGWCEKTKHELHIPKGYRKDKFVWMDYLKACKLQNAPKKLFRNRSPNGPMSKEFQVGMKLEAVDRKNPSLVCVATIADIVEDRLLVHFDNWDDSYDYWCDVNSPYVQPVGWCQENGRTLIAPQGYPNPENFSWTEYLEATQTNAVPAKVFKMRLPHGFLPNMKLEVVDKRNPRLIRVATIVDVDDQRVKVHFDGWDHKYDYWVEADSPDIHPIGWCDVTGHPLEVPQRTNDLKILPGQAVCPTPGCRGIGHIRGPRYSGHHSAFGCPYSDMNLKKEATLHDRLREQTQANLESDSSHSKSKSLCSLNFNGKHEKVNSQPRLVQQAKCLKIKGKEDIDLDNLFRVLVLHPRGLEYSVEQAQQVLHQSVSMSTVSAHPFRDLPLGREQHCKLLPGVADIRASQVARWTVDEVAEFVQSLLGCEEHAKCFKKEQIDGKAFLLLTQTDIVKVMKIKLGPALKIYNSILMFRHSQELPEEDIASGQEVRG.

Residues 1 to 44 (MKQPNRKRKLNMDSKERLDQDGRLEQAEEEKKPKDSTTPLSHVP) form a disordered region. Residues 10–35 (LNMDSKERLDQDGRLEQAEEEKKPKD) show a composition bias toward basic and acidic residues. 3 MBT repeats span residues 52–152 (WSWE…LHIP), 160–260 (FVWM…LIAP), and 269–364 (FSWT…LEVP). The CCHHC-type zinc finger occupies 370–414 (LKILPGQAVCPTPGCRGIGHIRGPRYSGHHSAFGCPYSDMNLKKE). Zn(2+)-binding residues include C379, C384, H398, and C404. Residues 543 to 607 (WTVDEVAEFV…YNSILMFRHS (65 aa)) form the SAM domain.

Its subcellular location is the nucleus. In terms of biological role, putative Polycomb group (PcG) protein. PcG proteins maintain the transcriptionally repressive state of genes, probably via a modification of chromatin, rendering it heritably changed in its expressibility. The polypeptide is Lethal(3)malignant brain tumor-like protein 4 (L3MBTL4) (Homo sapiens (Human)).